We begin with the raw amino-acid sequence, 309 residues long: Dicarboxylate carrier UCP2 (309 aa).

Residues 1–16 (MVGFKATDVPPTATVK) are Mitochondrial intermembrane-facing. 3 Solcar repeats span residues 11-106 (PTAT…VKQF), 114-203 (ASIG…IKDA), and 212-297 (DDLP…LKRA). The tract at residues 16-63 (KFLGAGTAACIADLITFPLDTAKVRLQIQGESQGPVHATASAQYRGVM) is important for interaction with long-chain fatty acids. A helical transmembrane segment spans residues 17 to 40 (FLGAGTAACIADLITFPLDTAKVR). Residues 41–77 (LQIQGESQGPVHATASAQYRGVMGTILTMVRTEGPRS) are Mitochondrial matrix-facing. Residues 78 to 103 (LYNGLVAGLQRQMSFASVRIGLYDSV) traverse the membrane as a helical segment. Topologically, residues 104–119 (KQFYTKGSEHASIGSR) are mitochondrial intermembrane. A helical membrane pass occupies residues 120–145 (LLAGSTTGALAVAVAQPTDVVKVRFQ). Residues 146–173 (AQARAGGGRRYQSTVNAYKTIAREEGFR) are Mitochondrial matrix-facing. The chain crosses the membrane as a helical span at residues 174–199 (GLWKGTSPNVARNAIVNCAELVTYDL). Residues 200-217 (IKDALLKANLMTDDLPCH) are Mitochondrial intermembrane-facing. Residues 218 to 242 (FTSAFGAGFCTTVIASPVDVVKTRY) traverse the membrane as a helical segment. The Mitochondrial matrix segment spans residues 243–268 (MNSALGQYSSAGHCALTMLQKEGPRA). A helical transmembrane segment spans residues 269 to 294 (FYKGFMPSFLRLGSWNVVMFVTYEQL). The tract at residues 278 to 285 (LRLGSWNV) is important for interaction with long-chain fatty acids. Over 295 to 309 (KRALMAACTSREAPF) the chain is Mitochondrial intermembrane.

This sequence belongs to the mitochondrial carrier (TC 2.A.29) family. As to quaternary structure, homotetramer. Adopts an asymmetrical dimer of dimers functional form. Interacts with MICU1 (when methylated); leading to decrease the calcium sensitivity of MICU1.

It localises to the mitochondrion inner membrane. It carries out the reaction L-aspartate(out) + phosphate(in) + H(+)(in) = L-aspartate(in) + phosphate(out) + H(+)(out). The enzyme catalyses oxaloacetate(out) + phosphate(in) + H(+)(in) = oxaloacetate(in) + phosphate(out) + H(+)(out). The catalysed reaction is (S)-malate(out) + phosphate(in) + H(+)(in) = (S)-malate(in) + phosphate(out) + H(+)(out). It catalyses the reaction malonate(out) + phosphate(in) + H(+)(in) = malonate(in) + phosphate(out) + H(+)(out). It carries out the reaction sulfate(out) + phosphate(in) + H(+)(in) = sulfate(in) + phosphate(out) + H(+)(out). The enzyme catalyses (S)-malate(out) = (S)-malate(in). The catalysed reaction is L-aspartate(out) = L-aspartate(in). It catalyses the reaction phosphate(in) = phosphate(out). It carries out the reaction chloride(in) = chloride(out). The enzyme catalyses H(+)(in) = H(+)(out). The catalysed reaction is a long-chain fatty acid(out) = a long-chain fatty acid(in). In terms of biological role, antiporter that exports dicarboxylate intermediates of the Krebs cycle in exchange for phosphate plus a proton across the inner membrane of mitochondria, a process driven by mitochondrial motive force with an overall impact on glycolysis, glutaminolysis and glutathione-dependent redox balance. Continuous export of oxaloacetate and related four-carbon dicarboxylates from mitochondrial matrix into the cytosol negatively regulates the oxidation of acetyl-CoA substrates via the Krebs cycle lowering the ATP/ADP ratio and reactive oxygen species (ROS) production. May mediate inducible proton entry into the mitochondrial matrix affecting ATP turnover as a protection mechanism against oxidative stress. The proton currents are most likely associated with fatty acid flipping across the inner membrane of mitochondria in a metabolic process regulated by free fatty acids and purine nucleotides. Regulates the use of glucose as a source of energy. Required for glucose-induced DRP1-dependent mitochondrial fission and neuron activation in the ventromedial nucleus of the hypothalamus (VMH). This mitochondrial adaptation mechanism modulates the VMH pool of glucose-excited neurons with an impact on systemic glucose homeostasis. Regulates ROS levels and metabolic reprogramming of macrophages during the resolution phase of inflammation. Attenuates ROS production in response to IL33 to preserve the integrity of the Krebs cycle required for persistent production of itaconate and subsequent GATA3-dependent differentiation of inflammation-resolving alternatively activated macrophages. Can unidirectionally transport anions including L-malate, L-aspartate, phosphate and chloride ions. Does not mediate adaptive thermogenesis. The protein is Dicarboxylate carrier UCP2 (UCP2) of Pongo abelii (Sumatran orangutan).